The following is a 231-amino-acid chain: MEGGRGVTRVLLVDDSPVDRRVVQLLLSSSACAGSFHVIAVDSAKKAMEFLGLKEEGKEQAIDMVLTDYCMPEMTGYELLKAIKALSPLKPIPVIVMSSENEPQRISRCMNAGAEDFIVKPLQSKDVQRLRKCSPANTQCCDAGSDGKPPLLLLPSDHVVVDATAASPPPPPSRRRAHFAGVAMVLHSSSVELSHYFPFLFKFILLVYAILCLGELLHRWSNGCFLNLWCA.

Positions Arg9–Pro135 constitute a Response regulatory domain. Asp68 carries the 4-aspartylphosphate modification.

Belongs to the ARR family. Type-A subfamily. In terms of processing, two-component system major event consists of a His-to-Asp phosphorelay between a sensor histidine kinase (HK) and a response regulator (RR). In plants, the His-to-Asp phosphorelay involves an additional intermediate named Histidine-containing phosphotransfer protein (HPt). This multistep phosphorelay consists of a His-Asp-His-Asp sequential transfer of a phosphate group between first a His and an Asp of the HK protein, followed by the transfer to a conserved His of the HPt protein and finally the transfer to an Asp in the receiver domain of the RR protein. In terms of tissue distribution, expressed in mature leaves and flowers, and at low levels in roots and shoots.

Functions as a response regulator involved in His-to-Asp phosphorelay signal transduction system. Phosphorylation of the Asp residue in the receiver domain activates the ability of the protein to promote the transcription of target genes. Type-A response regulators seem to act as negative regulators of the cytokinin signaling. The sequence is that of Two-component response regulator ORR1 from Oryza sativa subsp. indica (Rice).